The chain runs to 288 residues: Undecaprenyl-diphosphatase (288 aa).

8 helical membrane-spanning segments follow: residues Gly-25–Leu-45, Phe-53–Tyr-73, Trp-93–Leu-113, Leu-121–Ile-141, Val-171–Val-191, Ser-196–Leu-216, Gly-231–Ile-251, and Phe-263–Val-283.

Belongs to the UppP family.

The protein resides in the cell membrane. The catalysed reaction is di-trans,octa-cis-undecaprenyl diphosphate + H2O = di-trans,octa-cis-undecaprenyl phosphate + phosphate + H(+). Its function is as follows. Catalyzes the dephosphorylation of undecaprenyl diphosphate (UPP). Confers resistance to bacitracin. In Streptococcus thermophilus (strain CNRZ 1066), this protein is Undecaprenyl-diphosphatase.